A 487-amino-acid polypeptide reads, in one-letter code: GPI mannosyltransferase 1 (487 aa).

3 consecutive transmembrane segments (helical) span residues 26 to 46, 87 to 107, and 121 to 141; these read PLPLYVSAFLLRIVLLLYGLW, ILAWLLLPTTWTAGAQWGPWA, and VLFAAADLVAGWLIEQVLVMG. The interval 147-175 is disordered; that stretch reads SAAKGKEKDTEKTKEGGKKGPSVTASTGM. Positions 150–164 are enriched in basic and acidic residues; that stretch reads KGKEKDTEKTKEGGK. 7 consecutive transmembrane segments (helical) span residues 205–225, 227–247, 289–309, 359–379, 393–413, 429–449, and 462–482; these read LLGVLVMALLWAVLSRRITLA, LLLGFSVHFKIYPFIYAPAIV, LLLAFTSLATFLSLNFLMYRL, IESLAFLPQLVLSTILIPLTL, FAFVTFNKVCTSQYFLWYLVL, MGLVALGLWVLGQALWLQQAY, and GLWMASLGFFVVNCWILGVIV.

Belongs to the PIGM family.

The protein localises to the endoplasmic reticulum membrane. Its pathway is glycolipid biosynthesis; glycosylphosphatidylinositol-anchor biosynthesis. Mannosyltransferase involved in glycosylphosphatidylinositol-anchor biosynthesis. Transfers the first alpha-1,4-mannose to GlcN-acyl-PI during GPI precursor assembly. Required for cell wall integrity. The chain is GPI mannosyltransferase 1 (gim-1) from Neurospora crassa (strain ATCC 24698 / 74-OR23-1A / CBS 708.71 / DSM 1257 / FGSC 987).